Reading from the N-terminus, the 104-residue chain is Large ribosomal subunit protein uL23 (104 aa).

This sequence belongs to the universal ribosomal protein uL23 family. As to quaternary structure, part of the 50S ribosomal subunit. Contacts protein L29, and trigger factor when it is bound to the ribosome.

In terms of biological role, one of the early assembly proteins it binds 23S rRNA. One of the proteins that surrounds the polypeptide exit tunnel on the outside of the ribosome. Forms the main docking site for trigger factor binding to the ribosome. This chain is Large ribosomal subunit protein uL23, found in Nostoc punctiforme (strain ATCC 29133 / PCC 73102).